The following is a 45-amino-acid chain: Putative metallothionein-like protein 1B (45 aa).

This sequence belongs to the metallothionein superfamily. Type 15 family.

Its function is as follows. Metallothioneins have a high content of cysteine residues that bind various heavy metals. Confers tolerance to cadmium (Cd) and plays a role in Cd and zinc (Zn) homeostasis. This Arabidopsis thaliana (Mouse-ear cress) protein is Putative metallothionein-like protein 1B (MT1B).